The sequence spans 148 residues: 6,7-dimethyl-8-ribityllumazine synthase (148 aa).

5-amino-6-(D-ribitylamino)uracil-binding positions include Phe-13, 44–46 (ALE), and 73–75 (MVI). 78–79 (ET) serves as a coordination point for (2S)-2-hydroxy-3-oxobutyl phosphate. Residue His-81 is the Proton donor of the active site. Asn-106 lines the 5-amino-6-(D-ribitylamino)uracil pocket. Position 120 (Arg-120) interacts with (2S)-2-hydroxy-3-oxobutyl phosphate.

It belongs to the DMRL synthase family.

It carries out the reaction (2S)-2-hydroxy-3-oxobutyl phosphate + 5-amino-6-(D-ribitylamino)uracil = 6,7-dimethyl-8-(1-D-ribityl)lumazine + phosphate + 2 H2O + H(+). It participates in cofactor biosynthesis; riboflavin biosynthesis; riboflavin from 2-hydroxy-3-oxobutyl phosphate and 5-amino-6-(D-ribitylamino)uracil: step 1/2. Its function is as follows. Catalyzes the formation of 6,7-dimethyl-8-ribityllumazine by condensation of 5-amino-6-(D-ribitylamino)uracil with 3,4-dihydroxy-2-butanone 4-phosphate. This is the penultimate step in the biosynthesis of riboflavin. The protein is 6,7-dimethyl-8-ribityllumazine synthase of Agrobacterium fabrum (strain C58 / ATCC 33970) (Agrobacterium tumefaciens (strain C58)).